Consider the following 521-residue polypeptide: Glycogen synthase (521 aa).

Residue K18 participates in ADP-alpha-D-glucose binding.

This sequence belongs to the glycosyltransferase 1 family. Bacterial/plant glycogen synthase subfamily.

The enzyme catalyses [(1-&gt;4)-alpha-D-glucosyl](n) + ADP-alpha-D-glucose = [(1-&gt;4)-alpha-D-glucosyl](n+1) + ADP + H(+). Its pathway is glycan biosynthesis; glycogen biosynthesis. Its function is as follows. Synthesizes alpha-1,4-glucan chains using ADP-glucose. The chain is Glycogen synthase from Bordetella petrii (strain ATCC BAA-461 / DSM 12804 / CCUG 43448).